We begin with the raw amino-acid sequence, 770 residues long: MLPQRPQLLLLAGLLSLQSVLSQECTKYKVSTCRDCIESGPSCAWCQKLNFTGQGEPDSTRCDTRAQLLSKGCPADDIMEPKSLAETRQSQAGRQKQLSPEEVTLYLRPGQAAAFNVTFQRAKGYPIDLYYLMDLSYSMVDDLANVKKLGGDLLRALNDITESGRIGFGSFVDKTVLPFVNTHPEKLRNPCPNKEKECQPPFAFRHVLKLTDNSKQFETEVGKQLISGNLDAPEGGLDAMMQVAACPEEIGWRNVTRLLVFATDDGFHFAGDGKLGAILTPNDGRCHLEDNLYKSSNEFDYPSVGQLAHKLAESNIQPIFAVTKKMVKTYEKLTEIIPKSAVGELSEDSKNVVELIKSAYNKLSSRVFLDHNTLPDTLKVAYDSFCSNRVSQVDQPRGDCDGVQINVPITFQVKVTATECIQEQSFTIRALGFTDTVTVRVLPQCECQCREASRDRGVCGGRGSMECGVCRCDAGYIGKNCECQTHGRSSQELEGSCRKDNSSIICSGLGDCICGQCVCHTSDVPNKKIYGQFCECDNVNCERYDGQVCGGDKRGLCFCGACRCNDQYEGSACQCLKSTQGCLNLNGVECSGRGRCRCNVCQCDPGYQPPLCIDCPGCPVPCAGFAPCTECLKFDKGPFAKNCSAACGQTKLLSSPVPGGRKCKERDSEGCWMTYTLVQRDGRNRYDVHVDDMLECVKGPNIAAIVGGTVGGVVLVGILLLAIWKALTHLSDLREYHRFEKEKLKSQWNNDNPLFKSATTTVMNPKFAES.

Positions 1–22 (MLPQRPQLLLLAGLLSLQSVLS) are cleaved as a signal peptide. Position 23 is a pyrrolidone carboxylic acid (Q23). The Extracellular portion of the chain corresponds to 23 to 701 (QECTKYKVST…DMLECVKGPN (679 aa)). One can recognise a PSI domain in the interval 24-74 (ECTKYKVSTCRDCIESGPSCAWCQKLNFTGQGEPDSTRCDTRAQLLSKGCP). 28 disulfide bridges follow: C25/C43, C33/C447, C36/C62, C46/C73, C191/C198, C246/C286, C386/C400, C420/C445, C449/C467, C459/C470, C472/C481, C483/C514, C497/C512, C506/C517, C519/C534, C536/C559, C541/C557, C549/C562, C564/C573, C575/C598, C582/C596, C590/C601, C603/C612, C615/C618, C622/C663, C628/C647, C631/C643, and C671/C696. N50 and N116 each carry an N-linked (GlcNAc...) asparagine glycan. In terms of domain architecture, VWFA spans 124-363 (GYPIDLYYLM…ELIKSAYNKL (240 aa)). S136 and S138 together coordinate Mg(2+). Positions 138, 141, 142, and 173 each coordinate Ca(2+). N229, D231, P233, and E234 together coordinate Ca(2+). E234 is a Mg(2+) binding site. N254 is a glycosylation site (N-linked (GlcNAc...) asparagine). The Ca(2+) site is built by D264 and E347. The Cell attachment site motif lies at 397–399 (RGD). I-EGF domains follow at residues 449–482 (CREA…KNCE), 483–535 (CQTH…QFCE), 536–574 (CDNV…SACQ), and 575–613 (CLKS…PLCI). N-linked (GlcNAc...) asparagine glycosylation is present at N501. N642 is a glycosylation site (N-linked (GlcNAc...) asparagine). A helical membrane pass occupies residues 702-724 (IAAIVGGTVGGVVLVGILLLAIW). Topologically, residues 725-770 (KALTHLSDLREYHRFEKEKLKSQWNNDNPLFKSATTTVMNPKFAES) are cytoplasmic. A phosphoserine mark is found at S746 and S757. T759 and T761 each carry phosphothreonine.

It belongs to the integrin beta chain family. In terms of assembly, heterodimer of an alpha and a beta subunit. The ITGB2 beta subunit associates with the ITGAL, ITGAM, ITGAX or ITGAD alpha subunits. Found in a complex with CD177 and ITGAM/CD11b. Interacts with FGR. Interacts with COPS5 and RANBP9. Interacts with FLNA (via filamin repeats 4, 9, 12, 17, 19, 21, and 23). Interacts with THBD. In terms of processing, both Ser-746 and Ser-757 become phosphorylated when T-cells are exposed to phorbol esters. Phosphorylation on Thr-759 (but not on Ser-757) allows interaction with 14-3-3 proteins.

Its subcellular location is the cell membrane. The protein localises to the membrane raft. In terms of biological role, integrin ITGAL/ITGB2 is a receptor for ICAM1, ICAM2, ICAM3 and ICAM4. Integrin ITGAL/ITGB2 is also a receptor for the secreted form of ubiquitin-like protein ISG15; the interaction is mediated by ITGAL. Integrins ITGAM/ITGB2 and ITGAX/ITGB2 are receptors for the iC3b fragment of the third complement component and for fibrinogen. Integrin ITGAX/ITGB2 recognizes the sequence G-P-R in fibrinogen alpha-chain. Integrin ITGAM/ITGB2 recognizes P1 and P2 peptides of fibrinogen gamma chain. Integrin ITGAM/ITGB2 is also a receptor for factor X. Integrin ITGAD/ITGB2 is a receptor for ICAM3 and VCAM1. Contributes to natural killer cell cytotoxicity. Involved in leukocyte adhesion and transmigration of leukocytes including T-cells and neutrophils. Triggers neutrophil transmigration during lung injury through PTK2B/PYK2-mediated activation. Integrin ITGAL/ITGB2 in association with ICAM3, contributes to apoptotic neutrophil phagocytosis by macrophages. In association with alpha subunit ITGAM/CD11b, required for CD177-PRTN3-mediated activation of TNF primed neutrophils. The protein is Integrin beta-2 (ITGB2) of Ovis canadensis (Bighorn sheep).